Here is a 558-residue protein sequence, read N- to C-terminus: Coiled-coil domain-containing protein 63 (558 aa).

The segment at 1–26 is disordered; it reads MPTKKHRRKDPESPQEPSEKTKEQLV. Basic and acidic residues predominate over residues 9-26; that stretch reads KDPESPQEPSEKTKEQLV. 2 coiled-coil regions span residues 48 to 289 and 339 to 416; these read NFRS…KAKK and VTEL…VENL. A disordered region spans residues 531 to 558; sequence HYATRESRNRDSMPEKGDELKSKKKVTV. Residues 533-551 are compositionally biased toward basic and acidic residues; sequence ATRESRNRDSMPEKGDELK.

Functionally, plays a role in spermiogenesis. Involved in the elongation of flagella and the formation of sperm heads. The polypeptide is Coiled-coil domain-containing protein 63 (Bos taurus (Bovine)).